Here is a 399-residue protein sequence, read N- to C-terminus: Elongation factor Tu (399 aa).

The region spanning 10–209 is the tr-type G domain; the sequence is KPHVNVGTIG…EVDKYIPTPQ (200 aa). The segment at 19–26 is G1; sequence GHVDHGKT. 19–26 is a GTP binding site; that stretch reads GHVDHGKT. Mg(2+) is bound at residue threonine 26. The interval 60 to 64 is G2; sequence GITIA. Residues 81–84 are G3; sequence DCPG. Residues 81–85 and 136–139 contribute to the GTP site; these read DCPGH and NKQD. Residues 136 to 139 are G4; sequence NKQD. The tract at residues 174–176 is G5; that stretch reads SAL.

The protein belongs to the TRAFAC class translation factor GTPase superfamily. Classic translation factor GTPase family. EF-Tu/EF-1A subfamily. As to quaternary structure, monomer.

The protein resides in the cytoplasm. It catalyses the reaction GTP + H2O = GDP + phosphate + H(+). Its function is as follows. GTP hydrolase that promotes the GTP-dependent binding of aminoacyl-tRNA to the A-site of ribosomes during protein biosynthesis. The sequence is that of Elongation factor Tu from Helicobacter hepaticus (strain ATCC 51449 / 3B1).